Consider the following 556-residue polypeptide: Glutamine--tRNA ligase (556 aa).

The 'HIGH' region signature appears at 34-44 (PEPNGYLHIGH). ATP is bound by residues 35-37 (EPN) and 41-47 (HIGHAKS). The L-glutamine site is built by aspartate 67 and tyrosine 212. ATP is bound by residues threonine 231, 261–262 (RL), and 269–271 (MSK). A 'KMSKS' region motif is present at residues 268-272 (VMSKR).

Belongs to the class-I aminoacyl-tRNA synthetase family. As to quaternary structure, monomer.

The protein resides in the cytoplasm. The enzyme catalyses tRNA(Gln) + L-glutamine + ATP = L-glutaminyl-tRNA(Gln) + AMP + diphosphate. The polypeptide is Glutamine--tRNA ligase (Vibrio parahaemolyticus serotype O3:K6 (strain RIMD 2210633)).